We begin with the raw amino-acid sequence, 694 residues long: Polynucleotide 3'-phosphatase ZDP (694 aa).

2 consecutive PARP-type zinc fingers follow at residues 50–132 and 165–247; these read VVAE…EQCG and VIAD…EVNK. Residues Cys62, Cys65, His93, Cys96, Cys177, Cys180, His208, and Cys211 each contribute to the Zn(2+) site. Residues 266–331 are disordered; it reads AIADNELTEE…SPDSSKVISE (66 aa). Positions 302–321 are enriched in basic and acidic residues; the sequence is ESKKPASDEISEQKTKDVKN. Positions 322-331 are enriched in polar residues; that stretch reads SPDSSKVISE. A PARP-type 3 zinc finger spans residues 328–410; it reads VISEYAKSSR…ALKELVQQCG (83 aa). Zn(2+)-binding residues include Cys340, Cys343, His371, and Cys374.

It in the C-terminal section; belongs to the DNA 3' phosphatase family. As to quaternary structure, interacts with ROS1 (via the central region). Binds to XRCC1.

The protein resides in the nucleus. The protein localises to the nucleoplasm. The enzyme catalyses a 3'end (2'-deoxyribonucleotide 3'-phosphate)-DNA + H2O = a 3'-end 2'-deoxyribonucleotide-DNA + phosphate. Its activity is regulated as follows. Activated by the presence of DNA. Stimulated by XRCC1. Its function is as follows. Nick-sensing 3'-phosphoesterase involved in a base excision repair pathway required for active DNA demethylation. The N-terminal DNA-binding domain binds specifically to gap sites and sharply bends the target DNA. Lacks 5'-kinase activity but is capable of 3'-phosphoglycolate end processing. Inactive on 3'-alpha,beta-unsaturated aldehyde (3'-dRP). Protects partially genes from transcriptional silencing by preventing promoter DNA hypermethylation. The protein is Polynucleotide 3'-phosphatase ZDP (ZDP) of Arabidopsis thaliana (Mouse-ear cress).